Here is a 344-residue protein sequence, read N- to C-terminus: tRNA N6-adenosine threonylcarbamoyltransferase (344 aa).

The Fe cation site is built by H119 and H123. Residues 141 to 145, D174, G187, D191, and N280 contribute to the substrate site; that span reads VVSGG. D310 lines the Fe cation pocket.

This sequence belongs to the KAE1 / TsaD family. Fe(2+) is required as a cofactor.

It localises to the cytoplasm. It carries out the reaction L-threonylcarbamoyladenylate + adenosine(37) in tRNA = N(6)-L-threonylcarbamoyladenosine(37) in tRNA + AMP + H(+). Required for the formation of a threonylcarbamoyl group on adenosine at position 37 (t(6)A37) in tRNAs that read codons beginning with adenine. Is involved in the transfer of the threonylcarbamoyl moiety of threonylcarbamoyl-AMP (TC-AMP) to the N6 group of A37, together with TsaE and TsaB. TsaD likely plays a direct catalytic role in this reaction. The polypeptide is tRNA N6-adenosine threonylcarbamoyltransferase (Listeria innocua serovar 6a (strain ATCC BAA-680 / CLIP 11262)).